A 244-amino-acid chain; its full sequence is tRNA pseudouridine synthase A (244 aa).

Asp-52 acts as the Nucleophile in catalysis. Residue Tyr-110 participates in substrate binding.

This sequence belongs to the tRNA pseudouridine synthase TruA family. As to quaternary structure, homodimer.

It catalyses the reaction uridine(38/39/40) in tRNA = pseudouridine(38/39/40) in tRNA. Its function is as follows. Formation of pseudouridine at positions 38, 39 and 40 in the anticodon stem and loop of transfer RNAs. The sequence is that of tRNA pseudouridine synthase A from Caldicellulosiruptor bescii (strain ATCC BAA-1888 / DSM 6725 / KCTC 15123 / Z-1320) (Anaerocellum thermophilum).